The primary structure comprises 488 residues: UDP-N-acetylmuramate--L-alanine ligase (488 aa).

Position 129–135 (129–135 (GTHGKTT)) interacts with ATP.

It belongs to the MurCDEF family.

The protein localises to the cytoplasm. It carries out the reaction UDP-N-acetyl-alpha-D-muramate + L-alanine + ATP = UDP-N-acetyl-alpha-D-muramoyl-L-alanine + ADP + phosphate + H(+). Its pathway is cell wall biogenesis; peptidoglycan biosynthesis. In terms of biological role, cell wall formation. This chain is UDP-N-acetylmuramate--L-alanine ligase, found in Chromohalobacter salexigens (strain ATCC BAA-138 / DSM 3043 / CIP 106854 / NCIMB 13768 / 1H11).